Reading from the N-terminus, the 181-residue chain is Mannose-specific lectin (181 aa).

The N-terminal stretch at 1–30 is a signal peptide; that stretch reads MGRTTSSPKAMMRIATVAAILTILASTCMA. One can recognise a Bulb-type lectin domain in the interval 31-140; that stretch reads RNVLTNGEGL…DIWSTGTYRR (110 aa). Alpha-D-mannopyranose-binding residues include Gln56, Asp58, Asn60, Tyr64, Trp71, Ala72, Asn74, Gln88, Asp90, Asn92, Tyr96, Val103, Trp104, Asn107, Asn114, Gln120, Asp122, Asn124, Tyr128, and Trp133. Cysteines 59 and 83 form a disulfide.

As to quaternary structure, homodimer.

The protein localises to the secreted. Functionally, mannose-specific lectin. Shows agglutinating activity towards rabbit erythrocytes. However, it does not show agglutinating activity towards human erythrocytes. Has insecticidal activity against the cotton leafworm S.littoralis and the peach potato aphid M.persicae. Also displays antiviral activity and therefore may contribute to defense against infections. The sequence is that of Mannose-specific lectin from Allium sativum (Garlic).